We begin with the raw amino-acid sequence, 1021 residues long: Collagenase ColH (1021 aa).

The first 30 residues, 1-30, serve as a signal peptide directing secretion; sequence MKRKCLSKRLMLAITMATIFTVNSTLPIYA. A propeptide spanning residues 31-40 is cleaved from the precursor; sequence AVDKNNATAA. The segment at 41 to 320 is activator domain; it reads VQNESKRYTV…SADQIKRHYD (280 aa). Positions 41–717 are S1 metalloprotease domain; sequence VQNESKRYTV…TYDVVFHGYL (677 aa). The segment at 330–601 is catalytic subdomain; that stretch reads PLDKFKKEGK…MQERIDNYEN (272 aa). Residue aspartate 421 coordinates Zn(2+). Glutamate 430 lines the Ca(2+) pocket. Residue histidine 455 participates in Zn(2+) binding. Glutamate 456 is an active-site residue. Histidine 459 serves as a coordination point for Zn(2+). Ca(2+)-binding residues include glycine 463, valine 467, and glycine 469. Glutamate 487 lines the Zn(2+) pocket. The helper subdomain stretch occupies residues 609 to 721; that stretch reads DDYLVRHAYK…VFHGYLPNEG (113 aa). The segment at 718-810 is S2a domain; that stretch reads PNEGDSKNSL…VSTTTAEIKD (93 aa). Residues asparagine 725, serine 726, aspartate 753, aspartate 755, aspartate 794, asparagine 814, lysine 815, aspartate 842, aspartate 844, aspartate 884, glutamate 908, glutamate 910, asparagine 912, asparagine 913, threonine 931, aspartate 937, glutamine 938, and aspartate 939 each contribute to the Ca(2+) site. In terms of domain architecture, PKD 1 spans 727-808; that stretch reads LPYGKINGTY…SSVSTTTAEI (82 aa). Positions 811–904 are S2b domain; the sequence is LSENKLPVIY…KIKITDPVYP (94 aa). A PKD 2 domain is found at 816 to 905; the sequence is LPVIYMHVPK…IKITDPVYPI (90 aa). The tract at residues 903–922 is disordered; that stretch reads YPIGTEKEPNNSKETASGPI. An S3 collagen-binding domain region spans residues 905–1021; the sequence is IGTEKEPNNS…RINIEGSVGR (117 aa). The interval 1002–1004 is collagen-binding; that stretch reads YMF.

Belongs to the peptidase M9B family. Collagenase subfamily. It depends on Ca(2+) as a cofactor. The cofactor is Zn(2+). Post-translationally, upon purification gives rise to 98 kDa, 105 kDa and 116 kDa (full-length) proteins, all of which have the same N-terminus.

It is found in the secreted. The catalysed reaction is Digestion of native collagen in the triple helical region at Xaa-|-Gly bonds. With synthetic peptides, a preference is shown for Gly at P3 and P1', Pro and Ala at P2 and P2', and hydroxyproline, Ala or Arg at P3'.. Inhibited by EDTA. Inhibited by 1-10-phenanthroline. Inhibited by broad-spectrum zinc metalloprotease inhibitor batimastat. N-aryl mercaptoacetamide-based inhibitors have been isolated that act on clostridial collagenases with submicromolar affinity while having negligibile activity on human collagenases. Its function is as follows. Clostridial collagenases are among the most efficient degraders of eukaryotic collagen known; saprophytes use collagen as a carbon source while pathogens additionally digest collagen to aid in host colonization. Has both tripeptidylcarboxypeptidase on Gly-X-Y and endopeptidase activities; the endopeptidase cuts within the triple helix region of collagen while tripeptidylcarboxypeptidase successively digests the exposed ends, thus clostridial collagenases can digest large sections of collagen. The full-length protein has collagenase activity, while both the 116 kDa and 98 kDa forms act on gelatin. In vitro digestion of soluble calf skin collagen fibrils requires both ColG and ColH; ColG forms missing the second collagen-binding domain is also synergistic with ColH, although their overall efficiency is decreased. Digestion of collagen requires Ca(2+) and is inhibited by EDTA. The activator domain (residues 119-388) and catalytic subdomain (330-601) open and close around substrate allowing digestion when the protein is closed. The protein is Collagenase ColH of Hathewaya histolytica (Clostridium histolyticum).